The chain runs to 571 residues: Quinone-dependent D-lactate dehydrogenase (571 aa).

The FAD-binding PCMH-type domain maps to 44–273 (GGGPVFAVVR…FAVRTRTFPR (230 aa)). Residues 78–82 (ASNTG), 86–87 (GS), Gly-145, Ser-152, Gly-162, and Val-263 contribute to the FAD site.

Belongs to the quinone-dependent D-lactate dehydrogenase family. Requires FAD as cofactor.

It localises to the cell membrane. The catalysed reaction is (R)-lactate + a quinone = a quinol + pyruvate. Catalyzes the oxidation of D-lactate to pyruvate. Also has weak activity with L-lactate and DL-2-hydroxybutyrate. Electrons derived from D-lactate oxidation enter the electron transport chain. Essential for growth with D-lactate as sole carbon and energy source. The polypeptide is Quinone-dependent D-lactate dehydrogenase (Corynebacterium glutamicum (strain ATCC 13032 / DSM 20300 / JCM 1318 / BCRC 11384 / CCUG 27702 / LMG 3730 / NBRC 12168 / NCIMB 10025 / NRRL B-2784 / 534)).